A 212-amino-acid chain; its full sequence is Phosphatidylserine decarboxylase proenzyme (212 aa).

Residue Ser-182 is the Schiff-base intermediate with substrate; via pyruvic acid of the active site. Ser-182 is subject to Pyruvic acid (Ser); by autocatalysis.

This sequence belongs to the phosphatidylserine decarboxylase family. PSD-A subfamily. In terms of assembly, heterodimer of a large membrane-associated beta subunit and a small pyruvoyl-containing alpha subunit. It depends on pyruvate as a cofactor. Is synthesized initially as an inactive proenzyme. Formation of the active enzyme involves a self-maturation process in which the active site pyruvoyl group is generated from an internal serine residue via an autocatalytic post-translational modification. Two non-identical subunits are generated from the proenzyme in this reaction, and the pyruvate is formed at the N-terminus of the alpha chain, which is derived from the carboxyl end of the proenzyme. The post-translation cleavage follows an unusual pathway, termed non-hydrolytic serinolysis, in which the side chain hydroxyl group of the serine supplies its oxygen atom to form the C-terminus of the beta chain, while the remainder of the serine residue undergoes an oxidative deamination to produce ammonia and the pyruvoyl prosthetic group on the alpha chain.

Its subcellular location is the cell membrane. The enzyme catalyses a 1,2-diacyl-sn-glycero-3-phospho-L-serine + H(+) = a 1,2-diacyl-sn-glycero-3-phosphoethanolamine + CO2. The protein operates within phospholipid metabolism; phosphatidylethanolamine biosynthesis; phosphatidylethanolamine from CDP-diacylglycerol: step 2/2. In terms of biological role, catalyzes the formation of phosphatidylethanolamine (PtdEtn) from phosphatidylserine (PtdSer). The protein is Phosphatidylserine decarboxylase proenzyme of Chlorobium phaeobacteroides (strain DSM 266 / SMG 266 / 2430).